We begin with the raw amino-acid sequence, 434 residues long: Histidinol dehydrogenase (434 aa).

NAD(+) is bound by residues Tyr-130, Gln-188, and Asn-211. 3 residues coordinate substrate: Ser-237, Gln-259, and His-262. Zn(2+) contacts are provided by Gln-259 and His-262. Catalysis depends on proton acceptor residues Glu-326 and His-327. His-327, Asp-360, Glu-414, and His-419 together coordinate substrate. Asp-360 lines the Zn(2+) pocket. His-419 lines the Zn(2+) pocket.

This sequence belongs to the histidinol dehydrogenase family. Homodimer. Zn(2+) serves as cofactor.

The catalysed reaction is L-histidinol + 2 NAD(+) + H2O = L-histidine + 2 NADH + 3 H(+). The protein operates within amino-acid biosynthesis; L-histidine biosynthesis; L-histidine from 5-phospho-alpha-D-ribose 1-diphosphate: step 9/9. In terms of biological role, catalyzes the sequential NAD-dependent oxidations of L-histidinol to L-histidinaldehyde and then to L-histidine. The protein is Histidinol dehydrogenase of Shigella dysenteriae serotype 1 (strain Sd197).